Reading from the N-terminus, the 157-residue chain is Transcriptional repressor NrdR (157 aa).

A zinc finger spans residues 3–34 (CPFCNAEDTKVIDSRLVEEGTQVRRRRECLKC). The region spanning 49 to 139 (PRIIKRDGRR…VYRSFQDINA (91 aa)) is the ATP-cone domain.

This sequence belongs to the NrdR family. It depends on Zn(2+) as a cofactor.

Negatively regulates transcription of bacterial ribonucleotide reductase nrd genes and operons by binding to NrdR-boxes. This Coxiella burnetii (strain CbuK_Q154) (Coxiella burnetii (strain Q154)) protein is Transcriptional repressor NrdR.